The primary structure comprises 311 residues: CID domain-containing protein 1 (311 aa).

Positions 1–134 (MSDFTEQTLR…RLQEAHQQMK (134 aa)) constitute a CID domain. Positions 224-256 (MLEDYVKRLKEETKERESLETNLNMLIQNVRMS) form a coiled coil.

This chain is CID domain-containing protein 1 (cids-1), found in Caenorhabditis briggsae.